Here is a 164-residue protein sequence, read N- to C-terminus: Ribosome maturation factor RimM (164 aa).

Residues Lys90–Trp161 enclose the PRC barrel domain.

The protein belongs to the RimM family. Binds ribosomal protein uS19.

Its subcellular location is the cytoplasm. An accessory protein needed during the final step in the assembly of 30S ribosomal subunit, possibly for assembly of the head region. Essential for efficient processing of 16S rRNA. May be needed both before and after RbfA during the maturation of 16S rRNA. It has affinity for free ribosomal 30S subunits but not for 70S ribosomes. The sequence is that of Ribosome maturation factor RimM from Clostridium botulinum (strain Langeland / NCTC 10281 / Type F).